We begin with the raw amino-acid sequence, 291 residues long: MFEGILPAIITPFYRDSRASLDIEGLQSNIESLLQRGVHGIVPCGSTGESATLTFEEHEQVIGKAVEVVDGRVPVLAGTGSNNTEEAVRLTRSAKDAGADGALIISPYYNKPNRSGLIKHFTKLADLDIPIVLYNVPGRTGQNLQPDLVAELARHPNIVGIKEASGDITQISRIIEETRDEEFSVISGDDAMTLPVLAVGGAGVISVAANVDPGRMVGMYEAFRAGDLARAQVLHYELAPLMRAMFIDTNPIPVKKAVELLGMAAGPVRLPLDELDEAKTEQLRKVLVNHG.

T47 contacts pyruvate. Y134 acts as the Proton donor/acceptor in catalysis. K162 acts as the Schiff-base intermediate with substrate in catalysis. I205 is a binding site for pyruvate.

It belongs to the DapA family. As to quaternary structure, homotetramer; dimer of dimers.

The protein resides in the cytoplasm. The enzyme catalyses L-aspartate 4-semialdehyde + pyruvate = (2S,4S)-4-hydroxy-2,3,4,5-tetrahydrodipicolinate + H2O + H(+). It participates in amino-acid biosynthesis; L-lysine biosynthesis via DAP pathway; (S)-tetrahydrodipicolinate from L-aspartate: step 3/4. Catalyzes the condensation of (S)-aspartate-beta-semialdehyde [(S)-ASA] and pyruvate to 4-hydroxy-tetrahydrodipicolinate (HTPA). The protein is 4-hydroxy-tetrahydrodipicolinate synthase of Methanoculleus marisnigri (strain ATCC 35101 / DSM 1498 / JR1).